The primary structure comprises 574 residues: K(+)/H(+) antiporter NhaP2 (574 aa).

Helical transmembrane passes span 6-26 (INSF…LSPV), 34-54 (ILLI…GGIL), 58-78 (YSTA…DGGM), 87-107 (VALW…TSIT), 109-129 (VMAA…GAIV), 173-193 (IAIL…ISFI), 196-216 (FGLG…LVNL), 219-239 (LAEG…YAAS), 242-262 (LGGS…NKPT), 271-291 (VLDG…GLLL), 299-319 (IWLP…PLAV), 335-355 (WFIS…VFPM), and 359-379 (LPGA…SLLV). The 82-residue stretch at 405-486 (SGVEIYPSSE…LEALSNLFSQ (82 aa)) folds into the RCK C-terminal domain.

It belongs to the monovalent cation:proton antiporter 1 (CPA1) transporter (TC 2.A.36) family. NhaP2 subfamily.

The protein resides in the cell inner membrane. The enzyme catalyses K(+)(in) + H(+)(out) = K(+)(out) + H(+)(in). Its function is as follows. K(+)/H(+) antiporter that extrudes potassium in exchange for external protons and maintains the internal concentration of potassium under toxic levels. The sequence is that of K(+)/H(+) antiporter NhaP2 from Shewanella sp. (strain MR-7).